A 318-amino-acid chain; its full sequence is L-carnitine dehydrogenase (318 aa).

Gly14–Gly19 contacts NAD(+).

It belongs to the 3-hydroxyacyl-CoA dehydrogenase family. L-carnitine dehydrogenase subfamily. Homodimer.

It localises to the cytoplasm. The enzyme catalyses carnitine + NAD(+) = 3-dehydrocarnitine + NADH + H(+). It participates in amine and polyamine metabolism; carnitine metabolism. Its function is as follows. Catalyzes the NAD(+)-dependent oxidation of L-carnitine to 3-dehydrocarnitine. This is L-carnitine dehydrogenase from Pseudomonas syringae pv. syringae (strain B728a).